The following is a 126-amino-acid chain: H2B.U histone 2 (126 aa).

The tract at residues 1–35 is disordered; it reads MPEPSRSTPAPKKGSKKAITKAQKKDGKKRKRGRK. At Pro2 the chain carries N-acetylproline. Glu3 carries the ADP-ribosyl glutamic acid modification. At Ser7 the chain carries ADP-ribosylserine. Residue Lys12 is modified to N6-(beta-hydroxybutyryl)lysine; alternate. 2 positions are modified to N6-acetyllysine; alternate: Lys12 and Lys13. N6-crotonyllysine; alternate occurs at positions 12 and 13. Lys12 carries the N6-lactoyllysine; alternate modification. The residue at position 13 (Lys13) is an N6-(2-hydroxyisobutyryl)lysine; alternate. Ser15 is subject to Phosphoserine; by STK4/MST1. Lys16, Lys17, Lys21, and Lys24 each carry N6-acetyllysine; alternate. Lys16, Lys17, Lys21, and Lys24 each carry N6-crotonyllysine; alternate. 4 positions are modified to N6-lactoyllysine; alternate: Lys16, Lys17, Lys21, and Lys24. Lys17 is modified (N6-glutaryllysine; alternate). N6-(beta-hydroxybutyryl)lysine; alternate is present on Lys21. An N6-(2-hydroxyisobutyryl)lysine; alternate mark is found at Lys21 and Lys24. Lys21 carries the post-translational modification N6-butyryllysine; alternate. A Glycyl lysine isopeptide (Lys-Gly) (interchain with G-Cter in SUMO2); alternate cross-link involves residue Lys21. Lys25 carries the N6-(2-hydroxyisobutyryl)lysine modification. N6-(beta-hydroxybutyryl)lysine; alternate is present on Lys35. Lys35 carries the N6-crotonyllysine; alternate modification. The residue at position 35 (Lys35) is an N6-(2-hydroxyisobutyryl)lysine; alternate. Lys35 carries the N6-glutaryllysine; alternate modification. At Lys35 the chain carries N6-succinyllysine; alternate. Lys35 is covalently cross-linked (Glycyl lysine isopeptide (Lys-Gly) (interchain with G-Cter in ubiquitin); alternate). Position 36 is a polyADP-ribosyl glutamic acid (Glu36). Ser37 is subject to Phosphoserine; by AMPK. At Lys44 the chain carries N6-lactoyllysine; alternate. 3 positions are modified to N6-(2-hydroxyisobutyryl)lysine; alternate: Lys44, Lys47, and Lys58. Lys44 and Lys47 each carry N6-glutaryllysine; alternate. Lys47 carries the post-translational modification N6-methyllysine; alternate. The residue at position 58 (Lys58) is an N6,N6-dimethyllysine; alternate. Dimethylated arginine is present on Arg80. An N6-acetyllysine; alternate modification is found at Lys86. Position 86 is an N6-lactoyllysine; alternate (Lys86). At Lys86 the chain carries N6-(2-hydroxyisobutyryl)lysine; alternate. Lys86 carries the N6,N6,N6-trimethyllysine; alternate modification. An omega-N-methylarginine mark is found at Arg87 and Arg93. Lys109 carries the N6-(beta-hydroxybutyryl)lysine; alternate modification. An N6-lactoyllysine; alternate modification is found at Lys109. Position 109 is an N6-(2-hydroxyisobutyryl)lysine; alternate (Lys109). Lys109 bears the N6-glutaryllysine; alternate mark. Lys109 is modified (N6-methyllysine; alternate). An O-linked (GlcNAc) serine glycan is attached at Ser113. Thr116 carries the post-translational modification Phosphothreonine. N6-(beta-hydroxybutyryl)lysine; alternate is present on Lys117. N6-lactoyllysine; alternate occurs at positions 117 and 121. Lys117 and Lys121 each carry N6-(2-hydroxyisobutyryl)lysine; alternate. Lys117 and Lys121 each carry N6-glutaryllysine; alternate. 2 positions are modified to N6-succinyllysine; alternate: Lys117 and Lys121. At Lys117 the chain carries N6-methylated lysine; alternate. Lys121 is covalently cross-linked (Glycyl lysine isopeptide (Lys-Gly) (interchain with G-Cter in ubiquitin); alternate).

The protein belongs to the histone H2B family. As to quaternary structure, the nucleosome is a histone octamer containing two molecules each of H2A, H2B, H3 and H4 assembled in one H3-H4 heterotetramer and two H2A-H2B heterodimers. The octamer wraps approximately 147 bp of DNA. In terms of processing, monoubiquitination at Lys-35 (H2BK34Ub) by the MSL1/MSL2 dimer is required for histone H3 'Lys-4' (H3K4me) and 'Lys-79' (H3K79me) methylation and transcription activation at specific gene loci, such as HOXA9 and MEIS1 loci. Similarly, monoubiquitination at Lys-121 (H2BK120Ub) by the RNF20/40 complex gives a specific tag for epigenetic transcriptional activation and is also prerequisite for histone H3 'Lys-4' and 'Lys-79' methylation. It also functions cooperatively with the FACT dimer to stimulate elongation by RNA polymerase II. H2BK120Ub also acts as a regulator of mRNA splicing: deubiquitination by USP49 is required for efficient cotranscriptional splicing of a large set of exons. Post-translationally, phosphorylated on Ser-15 (H2BS14ph) by STK4/MST1 during apoptosis; which facilitates apoptotic chromatin condensation. Also phosphorylated on Ser-15 in response to DNA double strand breaks (DSBs), and in correlation with somatic hypermutation and immunoglobulin class-switch recombination. Phosphorylation at Ser-37 (H2BS36ph) by AMPK in response to stress promotes transcription. GlcNAcylation at Ser-113 promotes monoubiquitination of Lys-121. It fluctuates in response to extracellular glucose, and associates with transcribed genes. In terms of processing, ADP-ribosylated by PARP1 or PARP2 on Ser-7 (H2BS6ADPr) in response to DNA damage. H2BS6ADPr promotes recruitment of CHD1L. Mono-ADP-ribosylated on Glu-3 (H2BE2ADPr) by PARP3 in response to single-strand breaks. Poly ADP-ribosylation on Glu-36 (H2BE35ADPr) by PARP1 regulates adipogenesis: it inhibits phosphorylation at Ser-37 (H2BS36ph), thereby blocking expression of pro-adipogenetic genes. Post-translationally, crotonylation (Kcr) is specifically present in male germ cells and marks testis-specific genes in post-meiotic cells, including X-linked genes that escape sex chromosome inactivation in haploid cells. Crotonylation marks active promoters and enhancers and confers resistance to transcriptional repressors. It is also associated with post-meiotically activated genes on autosomes. Hydroxybutyrylation of histones is induced by starvation. In terms of processing, lactylated in macrophages by EP300/P300 by using lactoyl-CoA directly derived from endogenous or exogenous lactate, leading to stimulates gene transcription.

The protein resides in the nucleus. It localises to the chromosome. Its function is as follows. Core component of nucleosome. Nucleosomes wrap and compact DNA into chromatin, limiting DNA accessibility to the cellular machineries which require DNA as a template. Histones thereby play a central role in transcription regulation, DNA repair, DNA replication and chromosomal stability. DNA accessibility is regulated via a complex set of post-translational modifications of histones, also called histone code, and nucleosome remodeling. This chain is H2B.U histone 2, found in Mus musculus (Mouse).